The sequence spans 93 residues: Cell division protein CrgA (93 aa).

2 helical membrane passes run 31 to 51 (VWFV…LMVF) and 70 to 90 (LGPW…LLTM).

The protein belongs to the CrgA family.

The protein localises to the cell membrane. Functionally, involved in cell division. This Mycobacterium avium (strain 104) protein is Cell division protein CrgA.